The sequence spans 268 residues: MQREEKQLEASLDALLSQVADLKNSLGSFICKLENEYGRLTWPSVLDSFALLSGQLNTLNKVLKHEKTPLFRNQVIIPLVLSPDRDEDLMRQTEGRVPVFSHEVVPDHLRTKPDPEVEEQEKQLTTDAARIGADAAQKQIQSLNKMCSNLLEKISKEERESESGGLRPNKQTFNPTDTNALVAAVAFGKGLSNWRPSGSSGPGQAGQPGAGTILAGTSGLQQVQMAGAPSQQQPMLSGVQMAQAGQPGKMPSGIKTNIKSASMHPYQR.

Positions 1 to 28 form a coiled coil; it reads MQREEKQLEASLDALLSQVADLKNSLGS. S82 carries the post-translational modification Phosphoserine. Residues 133–163 adopt a coiled-coil conformation; the sequence is ADAAQKQIQSLNKMCSNLLEKISKEERESES. An interaction with the Elongin BC complex region spans residues 142–151; that stretch reads SLNKMCSNLL. Disordered regions lie at residues 156–176 and 193–268; these read KEER…FNPT and NWRP…PYQR. Residues 200-209 show a composition bias toward gly residues; it reads SGPGQAGQPG. The span at 218–235 shows a compositional bias: polar residues; sequence SGLQQVQMAGAPSQQQPM.

Belongs to the Mediator complex subunit 8 family. As to quaternary structure, component of the Mediator complex, which is composed of MED1, MED4, MED6, MED7, MED8, MED9, MED10, MED11, MED12, MED13, MED13L, MED14, MED15, MED16, MED17, MED18, MED19, MED20, MED21, MED22, MED23, MED24, MED25, MED26, MED27, MED29, MED30, MED31, CCNC, CDK8 and CDC2L6/CDK11. The MED12, MED13, CCNC and CDK8 subunits form a distinct module termed the CDK8 module. Mediator containing the CDK8 module is less active than Mediator lacking this module in supporting transcriptional activation. Individual preparations of the Mediator complex lacking one or more distinct subunits have been variously termed ARC, CRSP, DRIP, PC2, SMCC and TRAP. May be part of a multisubunit E3 ubiquitin-protein ligase complex with the elongin BC complex (ELOB and ELOC), CUL2 and RBX1.

The protein resides in the nucleus. Its pathway is protein modification; protein ubiquitination. Functionally, component of the Mediator complex, a coactivator involved in the regulated transcription of nearly all RNA polymerase II-dependent genes. Mediator functions as a bridge to convey information from gene-specific regulatory proteins to the basal RNA polymerase II transcription machinery. Mediator is recruited to promoters by direct interactions with regulatory proteins and serves as a scaffold for the assembly of a functional preinitiation complex with RNA polymerase II and the general transcription factors. May play a role as a target recruitment subunit in E3 ubiquitin-protein ligase complexes and thus in ubiquitination and subsequent proteasomal degradation of target proteins. The protein is Mediator of RNA polymerase II transcription subunit 8 (MED8) of Homo sapiens (Human).